The chain runs to 273 residues: Nucleotide-binding protein TTHA0319 (273 aa).

8–15 contributes to the ATP binding site; the sequence is GLSGAGKT. GTP is bound at residue 57-60; sequence DARA.

This sequence belongs to the RapZ-like family.

Functionally, displays ATPase and GTPase activities. In Thermus thermophilus (strain ATCC 27634 / DSM 579 / HB8), this protein is Nucleotide-binding protein TTHA0319.